The sequence spans 432 residues: uncharacterized protein (432 aa).

Over residues 1–18 (MAIGDKRKKNRKNKQNKK) the composition is skewed to basic residues. 3 disordered regions span residues 1-23 (MAIG…KNDN), 37-56 (NSNS…NGNG), and 122-168 (STNS…GSSL). Low complexity-rich tracts occupy residues 37–53 (NSNS…NNKN), 122–147 (STNS…QQQQ), and 154–168 (ESQS…GSSL). Positions 181 to 226 (LNDQLKIVQLEQKIVNLEKEIQRMRNEQNQIHKQNLNQYHELLKQI) form a coiled coil. 2 disordered regions span residues 270 to 290 (VQPV…KSNG) and 310 to 432 (SSKF…STLR). Residues 274–288 (STPSSSSNSLASKKS) are compositionally biased toward low complexity. Residues 311–324 (SKFAQSNSSPSRVN) show a composition bias toward polar residues. A compositionally biased stretch (low complexity) spans 352 to 378 (KKSATTTTTSSSSNNATTTTAKGSTST). Polar residues predominate over residues 383–414 (ITNSNNIKNSVLSPKSITKPNTPSNIIFSPLS).

This is an uncharacterized protein from Dictyostelium discoideum (Social amoeba).